The following is a 95-amino-acid chain: Homeotic protein bicoid (95 aa).

Disordered stretches follow at residues 1–29 and 42–63; these read NLEPLKSHTVVGLDKSCDDGSSDDMSTGM and GKPSAAQAQPQPPPPPLGMMHD.

Belongs to the paired homeobox family. Bicoid subfamily.

The protein resides in the nucleus. In terms of biological role, bicoid is polarity protein that provides positional cues for the development of head and thoracic segments. BCD regulates the expression of zygotic genes, possibly through its homeodomain, and inhibits the activity of other maternal gene products. In Drosophila subobscura (Fruit fly), this protein is Homeotic protein bicoid (bcd).